A 476-amino-acid chain; its full sequence is Chromosomal replication initiator protein DnaA (476 aa).

The segment at 1-87 is domain I, interacts with DnaA modulators; sequence MSESSHVGLW…LMYNVLVDKS (87 aa). The interval 87–130 is domain II; it reads SSGATVNQESTTRSTAIPQSGLPRVDERKAPGLLRAPAVQDLDP. Positions 131 to 348 are domain III, AAA+ region; sequence HLNPNYNFET…GIVISIMAHS (218 aa). Residues Gly-176, Gly-178, Lys-179, and Thr-180 each coordinate ATP. The segment at 349–476 is domain IV, binds dsDNA; the sequence is TIYNKEIDLD…KKRNVSNGER (128 aa).

Belongs to the DnaA family. As to quaternary structure, oligomerizes as a right-handed, spiral filament on DNA at oriC.

The protein resides in the cytoplasm. In terms of biological role, plays an essential role in the initiation and regulation of chromosomal replication. ATP-DnaA binds to the origin of replication (oriC) to initiate formation of the DNA replication initiation complex once per cell cycle. Binds the DnaA box (a 9 base pair repeat at the origin) and separates the double-stranded (ds)DNA. Forms a right-handed helical filament on oriC DNA; dsDNA binds to the exterior of the filament while single-stranded (ss)DNA is stabiized in the filament's interior. The ATP-DnaA-oriC complex binds and stabilizes one strand of the AT-rich DNA unwinding element (DUE), permitting loading of DNA polymerase. After initiation quickly degrades to an ADP-DnaA complex that is not apt for DNA replication. Binds acidic phospholipids. This is Chromosomal replication initiator protein DnaA from Bacteroides fragilis (strain YCH46).